Reading from the N-terminus, the 791-residue chain is Leucine-rich repeat-containing protein SOG2 (791 aa).

The disordered stretch occupies residues 1–28 (MVATSSKRTLDPKEEHLPADKTSTNSSN). Residues 8–19 (RTLDPKEEHLPA) show a composition bias toward basic and acidic residues. LRR repeat units follow at residues 43–64 (SGTT…DVGY), 67–88 (NVER…FKRL), 90–111 (RLQY…LTQC), 113–134 (QLEI…ISSF), 138–159 (NIRV…KSIT), and 163–183 (KLSI…DQVQ). Thr-214 carries the phosphothreonine modification. 2 disordered regions span residues 454–506 (ASKA…TPSA) and 534–569 (HTHG…PRQQ). The span at 469–486 (SSSSITSGGGPAASTTST) shows a compositional bias: low complexity. Residues 544 to 569 (NAISNGSSQTNMNEVKTTSDTIPRQQ) are compositionally biased toward polar residues.

The protein resides in the cytoplasm. In terms of biological role, required for proper cell morphogenesis and cell separation after mitosis. Functions in the RAM (regulation of ACE2 activity and cellular morphogenesis) signaling network and is required for proper ACE2 localization and CBK1 kinase activity. The sequence is that of Leucine-rich repeat-containing protein SOG2 from Saccharomyces cerevisiae (strain ATCC 204508 / S288c) (Baker's yeast).